We begin with the raw amino-acid sequence, 184 residues long: Der GTPase-activating protein YihI (184 aa).

Residues 1–107 (MNRPVKGAAD…VVAAKPTMSP (107 aa)) form a disordered region. The span at 21 to 32 (TREELEREARER) shows a compositional bias: basic and acidic residues. Residues 80-95 (SAVAKPKPKSKPSAPV) show a composition bias toward low complexity.

It belongs to the YihI family. Interacts with Der.

Its function is as follows. A GTPase-activating protein (GAP) that modifies Der/EngA GTPase function. May play a role in ribosome biogenesis. The sequence is that of Der GTPase-activating protein YihI from Pectobacterium carotovorum subsp. carotovorum (strain PC1).